The chain runs to 1790 residues: MPTSDKSRQTSAGKSFFGRKLHKERPVEDRWDAHGSWESLAPPSSAAGSRSSRYSKRSSIQSVDFGADIDPSLLSTSAGPITSIPFESLSTDTQSPIPVDYLSKAETSPRKEPSPGHLAKGVGDFHQYPAWDPSAMRNHQQFSHPTGPRPPPHAAGVAMSSSATGDKGARYQQWGRPGSSAGNAGLSHHSSSTVDSSTNSRMSIDQASIHSSLSSNTRGSSYISTDGSSRTTLPSHSNDRSNYYAAMNSGRGSSAQGAIPPAQPRVQNTEQYLTRPRDDRVVDQLFLELMQKRGWQNLPEQARRQMMAYPASKKWTLVHQDRLTELQGEQKRKQKARETHGYDGPSGILERADEEGSPEWYVKKVMDDTITSKQLASLSVSLRTQPISWVKAFVEAQGQIALTNVLVKINRKKVTGPVPAPPSGDKDLDREYDIVKCLKALMNNKYGADDALAHQQIIVALISSLLSPRLNTRKLVSEVLTFLCHWAEGQGHERVLQAMDHVKNHQGETGRFDAWMRIVEVTIDGRGKMGSLVGASEEYRSGGIGMENLLMEYAVSTMILINMLVDAPENDLQLRCHIRAQFISCGIKRLLSKMEGFQYEVIDKQIEHFRENEAIDYEDLLQRESSSTKDSIEGEVKDMTDPLQITDAIASRLNGTRAHDYFLSALQHLLLIRENSGEDGLRMYQLVDAMLSYVAMDRRLPDLDLRQGLTFTVQSLLDRLHTDAEARRAYDESLEARQIAEAALAERDEMKAQVELGADGLVRKLQKQIEEQTGIIELQSRQNEMLKAELADVQRLRAQELQRNELETRELYLMLRDAQDIAASNAKKSNMGEAETDPAHMRGILDREKLLTRLEKQLERTKTQFKLEGKVWGQHDPSDRLRELREQMDGDAGPREAFEEQARLNLSLNPVGSVYRKKTYIQGMEDTATEELGQTDDEVVYAKARLVDLHRPRMDPEQATGLLGEIAAKVPKIDADDAKDEGKPTESEQPAEGAATKGDEQGVDDTVAVDKATAAPPPPPPPPPAHPGLSGAAPPPPPPPPPPPPGAGAAPPPPPPPPPPPPGGLGGPPPPPPPPPPGGFGGPPPPPPPPGGFGGPPPPPPPPPGGAFGVPPPPPPPGTVIGGWRANYLASQGAPSHAIPVMSSIRPKKKLKALHWDKVDTPQVTVWATHGTTPQEKEEKYVELAKRGVLDEVERLFMAKETRIFGGGVAAKQRKDKKQIISNDLSKNFQIALSKFSQFPAEEVVRRIIHCDAEILDNMVVMEFLQRDEMCTVPENVSKLMAPYSKDWTGPDAANTEREQDPSELTREDQIYLYTAFELNHYWKARMRALALTRSFEPDYEHISAKLREVVRVSESLRDSVSLMNVLGLILDIGNFMNDANKQAQGFKLSSLARLGMVKDDKNETTFADLVERIVRNQYPEWEDFTEQISGVIGLQKLNVDQLRTDAKKYIDNIKNVQASLDAGNLSDPKKFHPQDRVSQITQRSMKDARRKAEQMQLYLEEMVKTYDDIMVFYGEDNTDDGARRDFFAKLAAFLQEWKKSKEKNIALEEARRRTEASLARKRINVGLANGAGAAGDAPVSPATSGAMDSLLEKLRAAAPQAKDQRDRRRRARLKERHQVRVASGQKIPDLEGAEAPGSGGQNSGATDTNATDSSLLSPTIQEPEGGSSPIASQSEDVADRAASMLQDMLRNSPDPERTRRRRESAEEERRKRRLRRRNGATSGSKDSNDTTPLSPVTEPTSTQGESAEPENLSLSSPPNGEDPTLNPPTIVLSSDASDTPDDEHRPSTS.

Disordered stretches follow at residues 1-275 (MPTS…YLTR) and 328-350 (GEQKRKQKARETHGYDGPSGILE). Positions 24–35 (ERPVEDRWDAHG) are enriched in basic and acidic residues. 2 stretches are compositionally biased toward low complexity: residues 39-62 (SLAPPSSAAGSRSSRYSKRSSIQS) and 187-203 (SHHSSSTVDSSTNSRMS). The span at 205-236 (DQASIHSSLSSNTRGSSYISTDGSSRTTLPSH) shows a compositional bias: polar residues. In terms of domain architecture, GBD/FH3 spans 274–702 (TRPRDDRVVD…YVAMDRRLPD (429 aa)). Positions 328–341 (GEQKRKQKARETHG) are enriched in basic and acidic residues. Residues 724–811 (AEARRAYDES…QRNELETREL (88 aa)) are a coiled coil. Positions 955–1136 (DPEQATGLLG…NYLASQGAPS (182 aa)) constitute an FH1 domain. The segment covering 975–986 (ADDAKDEGKPTE) has biased composition (basic and acidic residues). Disordered regions lie at residues 975–1119 (ADDA…PPGT), 1465–1484 (NLSDPKKFHPQDRVSQITQR), and 1596–1790 (RAAA…PSTS). 2 stretches are compositionally biased toward pro residues: residues 1015 to 1026 (APPPPPPPPPAH) and 1033 to 1118 (APPP…PPPG). Residues 1141–1564 (VMSSIRPKKK…TEASLARKRI (424 aa)) form the FH2 domain. The stretch at 1435–1566 (LQKLNVDQLR…ASLARKRINV (132 aa)) forms a coiled coil. Residues 1581–1613 (SPATSGAMDSLLEKLRAAAPQAKDQRDRRRRAR) enclose the DAD domain. Positions 1608–1620 (RRRRARLKERHQV) are enriched in basic residues. Residues 1644–1661 (SGATDTNATDSSLLSPTI) show a composition bias toward polar residues. A compositionally biased stretch (basic and acidic residues) spans 1694–1710 (PDPERTRRRRESAEEER). The span at 1720–1746 (GATSGSKDSNDTTPLSPVTEPTSTQGE) shows a compositional bias: polar residues.

The protein belongs to the formin homology family. BNI1 subfamily.

Its function is as follows. Involved in cytokinesis. Overexpression results in growth inhibition. The protein is Cytokinesis protein sepA (sepA) of Emericella nidulans (strain FGSC A4 / ATCC 38163 / CBS 112.46 / NRRL 194 / M139) (Aspergillus nidulans).